Reading from the N-terminus, the 422-residue chain is Ribosomal RNA small subunit methyltransferase B (422 aa).

S-adenosyl-L-methionine-binding positions include 254 to 260 (CAAPGGK), Asp-277, Asp-303, and Asp-322. The active-site Nucleophile is Cys-375.

It belongs to the class I-like SAM-binding methyltransferase superfamily. RsmB/NOP family.

It localises to the cytoplasm. It carries out the reaction cytidine(967) in 16S rRNA + S-adenosyl-L-methionine = 5-methylcytidine(967) in 16S rRNA + S-adenosyl-L-homocysteine + H(+). Its function is as follows. Specifically methylates the cytosine at position 967 (m5C967) of 16S rRNA. The polypeptide is Ribosomal RNA small subunit methyltransferase B (Proteus mirabilis (strain HI4320)).